Reading from the N-terminus, the 130-residue chain is Small ribosomal subunit protein eS6 (130 aa).

The tract at residues 78-98 is disordered; that stretch reads SGPPGFRPERKGERRRKTVRG.

The protein belongs to the eukaryotic ribosomal protein eS6 family.

The polypeptide is Small ribosomal subunit protein eS6 (Methanopyrus kandleri (strain AV19 / DSM 6324 / JCM 9639 / NBRC 100938)).